Consider the following 85-residue polypeptide: U4-theraphotoxin-Hhn1f (85 aa).

The first 22 residues, 1-22 (MKVTLIAILTCAAVLVLHTTAA), serve as a signal peptide directing secretion. Positions 23–48 (EELEAESQLMEVGMPDTELAAVDEER) are excised as a propeptide. The cysteines at positions 71 and 82 are disulfide-linked.

The protein belongs to the neurotoxin 12 (Hwtx-2) family. 02 (Hwtx-2) subfamily. In terms of tissue distribution, expressed by the venom gland.

It localises to the secreted. Its function is as follows. Postsynaptic neurotoxin. In Cyriopagopus hainanus (Chinese bird spider), this protein is U4-theraphotoxin-Hhn1f.